Consider the following 148-residue polypeptide: Lysozyme C (148 aa).

The signal sequence occupies residues 1-18 (MKAPLLLGLLLLSVTVQG). In terms of domain architecture, C-type lysozyme spans 19–148 (KVFERCDLAR…VSQYVRNCGV (130 aa)). 4 disulfide bridges follow: Cys-24/Cys-146, Cys-48/Cys-134, Cys-83/Cys-99, and Cys-95/Cys-113. Active-site residues include Glu-53 and Asp-71.

It belongs to the glycosyl hydrolase 22 family. Monomer.

It is found in the secreted. It catalyses the reaction Hydrolysis of (1-&gt;4)-beta-linkages between N-acetylmuramic acid and N-acetyl-D-glucosamine residues in a peptidoglycan and between N-acetyl-D-glucosamine residues in chitodextrins.. In terms of biological role, lysozymes have primarily a bacteriolytic function; those in tissues and body fluids are associated with the monocyte-macrophage system and enhance the activity of immunoagents. The chain is Lysozyme C (LYZ) from Leptonychotes weddellii (Weddell seal).